Reading from the N-terminus, the 581-residue chain is DNA primase (581 aa).

Residues 40–64 (CPFHNEKTPSFTVNGEKQFYHCFGC) form a CHC2-type zinc finger. One can recognise a Toprim domain in the interval 259-341 (NRLLVVEGYM…GRQLRFMFLP (83 aa)). Glutamate 265, aspartate 309, and aspartate 311 together coordinate Mg(2+).

Belongs to the DnaG primase family. Monomer. Interacts with DnaB. Requires Zn(2+) as cofactor. Mg(2+) is required as a cofactor.

It carries out the reaction ssDNA + n NTP = ssDNA/pppN(pN)n-1 hybrid + (n-1) diphosphate.. Its function is as follows. RNA polymerase that catalyzes the synthesis of short RNA molecules used as primers for DNA polymerase during DNA replication. This chain is DNA primase, found in Shigella flexneri.